The primary structure comprises 85 residues: MAHKKGQGSTQNNRDSAGRRLGVKKYGGEVVRAGNIIIRQRGTRVHLGQNVGMGKDHTIYSLIDGVVKFEQKDKNRKKVSVYAAS.

Residues 1-23 (MAHKKGQGSTQNNRDSAGRRLGV) form a disordered region.

Belongs to the bacterial ribosomal protein bL27 family.

In Aliarcobacter butzleri (strain RM4018) (Arcobacter butzleri), this protein is Large ribosomal subunit protein bL27.